The following is a 197-amino-acid chain: Putative sulfur carrier protein aq_1421 (197 aa).

Cys-17 functions as the Cysteine persulfide intermediate in the catalytic mechanism.

This sequence belongs to the sulfur carrier protein TusA family.

The polypeptide is Putative sulfur carrier protein aq_1421 (Aquifex aeolicus (strain VF5)).